The following is a 445-amino-acid chain: Anaerobilin synthase (445 aa).

A Radical SAM core domain is found at 52–287 (TASPRKRLVY…LQGCDFMDDA (236 aa)). Y61 contacts S-adenosyl-L-methionine. [4Fe-4S] cluster-binding residues include C67 and C71. S-adenosyl-L-methionine is bound at residue F73. C74 is a [4Fe-4S] cluster binding site. Residues G118, 119–120 (GT), E151, Q178, R190, and D215 each bind S-adenosyl-L-methionine.

Belongs to the anaerobic coproporphyrinogen-III oxidase family. ChuW/HutW subfamily. [4Fe-4S] cluster is required as a cofactor.

The enzyme catalyses 2 reduced [flavodoxin] + heme b + 2 S-adenosyl-L-methionine = anaerobilin + 2 oxidized [flavodoxin] + Fe(2+) + 5'-deoxyadenosine + L-methionine + S-adenosyl-L-homocysteine. Inhibited by exposure to molecular oxygen. Involved in heme degradation and iron utilization under anaerobic conditions. Catalyzes a radical-mediated mechanism facilitating iron liberation and the production of the tetrapyrrole product anaerobilin. Can use heme, mesoheme and deuteroheme as substrates. The protein is Anaerobilin synthase of Escherichia coli O157:H7.